A 136-amino-acid polypeptide reads, in one-letter code: Translation initiation factor 5A (136 aa).

K38 carries the post-translational modification Hypusine.

It belongs to the eIF-5A family.

Its subcellular location is the cytoplasm. Its function is as follows. Functions by promoting the formation of the first peptide bond. This chain is Translation initiation factor 5A, found in Methanopyrus kandleri (strain AV19 / DSM 6324 / JCM 9639 / NBRC 100938).